Reading from the N-terminus, the 259-residue chain is Glutamate racemase (259 aa).

Residues 12-13 (DS) and 44-45 (YG) each bind substrate. C75 (proton donor/acceptor) is an active-site residue. Residue 76–77 (NT) coordinates substrate. C186 functions as the Proton donor/acceptor in the catalytic mechanism. Residue 187 to 188 (TH) coordinates substrate.

Belongs to the aspartate/glutamate racemases family.

It carries out the reaction L-glutamate = D-glutamate. The protein operates within cell wall biogenesis; peptidoglycan biosynthesis. Provides the (R)-glutamate required for cell wall biosynthesis. The protein is Glutamate racemase of Clostridium novyi (strain NT).